Here is an 89-residue protein sequence, read N- to C-terminus: MKKDIHPDYHPVVFKDAGTGHSFLTKSTATSDRTVEWEDGNEYPLIVVDVTAESHPFWTGAQRVMDTAGRVEKFNQRFGAMARRKKKNA.

It belongs to the bacterial ribosomal protein bL31 family. Type B subfamily. In terms of assembly, part of the 50S ribosomal subunit.

This Corynebacterium aurimucosum (strain ATCC 700975 / DSM 44827 / CIP 107346 / CN-1) (Corynebacterium nigricans) protein is Large ribosomal subunit protein bL31B.